The sequence spans 345 residues: S-adenosylmethionine:tRNA ribosyltransferase-isomerase (345 aa).

The protein belongs to the QueA family. As to quaternary structure, monomer.

It localises to the cytoplasm. It carries out the reaction 7-aminomethyl-7-carbaguanosine(34) in tRNA + S-adenosyl-L-methionine = epoxyqueuosine(34) in tRNA + adenine + L-methionine + 2 H(+). It participates in tRNA modification; tRNA-queuosine biosynthesis. Functionally, transfers and isomerizes the ribose moiety from AdoMet to the 7-aminomethyl group of 7-deazaguanine (preQ1-tRNA) to give epoxyqueuosine (oQ-tRNA). This chain is S-adenosylmethionine:tRNA ribosyltransferase-isomerase, found in Helicobacter pylori (strain Shi470).